A 376-amino-acid chain; its full sequence is Succinyl-diaminopimelate desuccinylase 1 (376 aa).

H67 lines the Zn(2+) pocket. D69 is a catalytic residue. D100 lines the Zn(2+) pocket. The Proton acceptor role is filled by E134. Zn(2+)-binding residues include E135, E163, and H349.

Belongs to the peptidase M20A family. DapE subfamily. As to quaternary structure, homodimer. Zn(2+) is required as a cofactor. The cofactor is Co(2+).

The catalysed reaction is N-succinyl-(2S,6S)-2,6-diaminopimelate + H2O = (2S,6S)-2,6-diaminopimelate + succinate. Its pathway is amino-acid biosynthesis; L-lysine biosynthesis via DAP pathway; LL-2,6-diaminopimelate from (S)-tetrahydrodipicolinate (succinylase route): step 3/3. In terms of biological role, catalyzes the hydrolysis of N-succinyl-L,L-diaminopimelic acid (SDAP), forming succinate and LL-2,6-diaminopimelate (DAP), an intermediate involved in the bacterial biosynthesis of lysine and meso-diaminopimelic acid, an essential component of bacterial cell walls. In Shewanella loihica (strain ATCC BAA-1088 / PV-4), this protein is Succinyl-diaminopimelate desuccinylase 1.